The following is a 201-amino-acid chain: uncharacterized protein (201 aa).

In terms of assembly, interacts with the chaperones HSP82 and HSC82.

This is an uncharacterized protein from Saccharomyces cerevisiae (strain ATCC 204508 / S288c) (Baker's yeast).